The primary structure comprises 198 residues: Elongation factor Ts (198 aa).

Residues 81-84 are involved in Mg(2+) ion dislocation from EF-Tu; the sequence is TDFV.

Belongs to the EF-Ts family.

Its subcellular location is the cytoplasm. In terms of biological role, associates with the EF-Tu.GDP complex and induces the exchange of GDP to GTP. It remains bound to the aminoacyl-tRNA.EF-Tu.GTP complex up to the GTP hydrolysis stage on the ribosome. The polypeptide is Elongation factor Ts (Pseudothermotoga lettingae (strain ATCC BAA-301 / DSM 14385 / NBRC 107922 / TMO) (Thermotoga lettingae)).